A 415-amino-acid polypeptide reads, in one-letter code: Peptide chain release factor subunit 1 (415 aa).

Belongs to the eukaryotic release factor 1 family. In terms of assembly, heterodimer of two subunits, one of which binds GTP.

The protein localises to the cytoplasm. Directs the termination of nascent peptide synthesis (translation) in response to the termination codons UAA, UAG and UGA. The protein is Peptide chain release factor subunit 1 of Thermococcus onnurineus (strain NA1).